A 308-amino-acid polypeptide reads, in one-letter code: tRNA pseudouridine synthase B (308 aa).

Catalysis depends on D47, which acts as the Nucleophile.

Belongs to the pseudouridine synthase TruB family. Type 1 subfamily.

The catalysed reaction is uridine(55) in tRNA = pseudouridine(55) in tRNA. Functionally, responsible for synthesis of pseudouridine from uracil-55 in the psi GC loop of transfer RNAs. The chain is tRNA pseudouridine synthase B from Xanthomonas euvesicatoria pv. vesicatoria (strain 85-10) (Xanthomonas campestris pv. vesicatoria).